We begin with the raw amino-acid sequence, 566 residues long: Glucose starvation modulator protein 1 (566 aa).

Positions 20–48 (CVFCHQKHLQCSNERPCKNCVKRNIAHGC) form a DNA-binding region, zn(2)-C6 fungal-type. 2 disordered regions span residues 65 to 93 (PGAVSNKQSTPRKKLKTGPVSTSVSPMDS) and 250 to 270 (KQASPSPSNTSTSENNTNTLS). Positions 83-93 (PVSTSVSPMDS) are enriched in polar residues. Over residues 253–270 (SPSPSNTSTSENNTNTLS) the composition is skewed to low complexity.

This sequence belongs to the ERT1/acuK family.

The protein localises to the nucleus. In terms of biological role, transcription factor which regulates nonfermentable carbon utilization. In Candida albicans (strain SC5314 / ATCC MYA-2876) (Yeast), this protein is Glucose starvation modulator protein 1 (ZCF23).